The primary structure comprises 146 residues: Large ribosomal subunit protein uL15 (146 aa).

Positions 1–13 (MKLHELRPAEGSK) are enriched in basic and acidic residues. The interval 1–54 (MKLHELRPAEGSKKAPKRVGRGNGSGLGKTAGKGHKGQNARSGGGVRPGFEGGQ) is disordered. Composition is skewed to gly residues over residues 21-31 (RGNGSGLGKTA) and 42-52 (SGGGVRPGFEG).

The protein belongs to the universal ribosomal protein uL15 family. Part of the 50S ribosomal subunit.

Its function is as follows. Binds to the 23S rRNA. In Clostridium novyi (strain NT), this protein is Large ribosomal subunit protein uL15.